We begin with the raw amino-acid sequence, 203 residues long: Guanylate kinase (203 aa).

In terms of domain architecture, Guanylate kinase-like spans 5 to 183 (GVLYILSAPS…AVEELKSVII (179 aa)). 12–19 (APSGAGKT) is an ATP binding site.

The protein belongs to the guanylate kinase family.

It localises to the cytoplasm. The enzyme catalyses GMP + ATP = GDP + ADP. Its function is as follows. Essential for recycling GMP and indirectly, cGMP. The sequence is that of Guanylate kinase from Geobacter sulfurreducens (strain ATCC 51573 / DSM 12127 / PCA).